The sequence spans 383 residues: Acetylornithine deacetylase (383 aa).

His80 lines the Zn(2+) pocket. Asp82 is an active-site residue. A Zn(2+)-binding site is contributed by Asp112. Residue Glu144 is part of the active site. Residues Glu145, Glu169, and His355 each coordinate Zn(2+).

Belongs to the peptidase M20A family. ArgE subfamily. In terms of assembly, homodimer. Requires Zn(2+) as cofactor. Co(2+) serves as cofactor. Glutathione is required as a cofactor.

The protein resides in the cytoplasm. It carries out the reaction N(2)-acetyl-L-ornithine + H2O = L-ornithine + acetate. It participates in amino-acid biosynthesis; L-arginine biosynthesis; L-ornithine from N(2)-acetyl-L-ornithine (linear): step 1/1. In terms of biological role, catalyzes the hydrolysis of the amide bond of N(2)-acetylated L-amino acids. Cleaves the acetyl group from N-acetyl-L-ornithine to form L-ornithine, an intermediate in L-arginine biosynthesis pathway, and a branchpoint in the synthesis of polyamines. The polypeptide is Acetylornithine deacetylase (Escherichia coli (strain SMS-3-5 / SECEC)).